The following is a 345-amino-acid chain: Phosphoribosylformylglycinamidine cyclo-ligase (345 aa).

Belongs to the AIR synthase family.

Its subcellular location is the cytoplasm. It carries out the reaction 2-formamido-N(1)-(5-O-phospho-beta-D-ribosyl)acetamidine + ATP = 5-amino-1-(5-phospho-beta-D-ribosyl)imidazole + ADP + phosphate + H(+). It functions in the pathway purine metabolism; IMP biosynthesis via de novo pathway; 5-amino-1-(5-phospho-D-ribosyl)imidazole from N(2)-formyl-N(1)-(5-phospho-D-ribosyl)glycinamide: step 2/2. The chain is Phosphoribosylformylglycinamidine cyclo-ligase from Sodalis glossinidius (strain morsitans).